A 223-amino-acid polypeptide reads, in one-letter code: Deoxyribose-phosphate aldolase (223 aa).

The active-site Proton donor/acceptor is Asp89. Lys154 (schiff-base intermediate with acetaldehyde) is an active-site residue. Catalysis depends on Lys183, which acts as the Proton donor/acceptor.

The protein belongs to the DeoC/FbaB aldolase family. DeoC type 1 subfamily.

Its subcellular location is the cytoplasm. The catalysed reaction is 2-deoxy-D-ribose 5-phosphate = D-glyceraldehyde 3-phosphate + acetaldehyde. The protein operates within carbohydrate degradation; 2-deoxy-D-ribose 1-phosphate degradation; D-glyceraldehyde 3-phosphate and acetaldehyde from 2-deoxy-alpha-D-ribose 1-phosphate: step 2/2. In terms of biological role, catalyzes a reversible aldol reaction between acetaldehyde and D-glyceraldehyde 3-phosphate to generate 2-deoxy-D-ribose 5-phosphate. The sequence is that of Deoxyribose-phosphate aldolase from Thermoanaerobacter sp. (strain X514).